A 553-amino-acid polypeptide reads, in one-letter code: Chaperonin GroEL (553 aa).

Residues 29–32 (TLGP), K50, 86–90 (DGTTT), G424, and D504 contribute to the ATP site.

Belongs to the chaperonin (HSP60) family. Forms a cylinder of 14 subunits composed of two heptameric rings stacked back-to-back. Interacts with the co-chaperonin GroES.

It localises to the cytoplasm. It carries out the reaction ATP + H2O + a folded polypeptide = ADP + phosphate + an unfolded polypeptide.. Together with its co-chaperonin GroES, plays an essential role in assisting protein folding. The GroEL-GroES system forms a nano-cage that allows encapsulation of the non-native substrate proteins and provides a physical environment optimized to promote and accelerate protein folding. This chain is Chaperonin GroEL, found in Koribacter versatilis (strain Ellin345).